The sequence spans 303 residues: Glycine--tRNA ligase alpha subunit (303 aa).

The protein belongs to the class-II aminoacyl-tRNA synthetase family. In terms of assembly, tetramer of two alpha and two beta subunits.

The protein resides in the cytoplasm. It carries out the reaction tRNA(Gly) + glycine + ATP = glycyl-tRNA(Gly) + AMP + diphosphate. This Escherichia fergusonii (strain ATCC 35469 / DSM 13698 / CCUG 18766 / IAM 14443 / JCM 21226 / LMG 7866 / NBRC 102419 / NCTC 12128 / CDC 0568-73) protein is Glycine--tRNA ligase alpha subunit.